Consider the following 343-residue polypeptide: Aspartate-semialdehyde dehydrogenase (343 aa).

NADP(+)-binding positions include 20-23 (SGAV) and 48-49 (RS). Arg-108 is a binding site for phosphate. The active-site Acyl-thioester intermediate is the Cys-137. Substrate is bound at residue Gln-164. Residue 167-168 (SG) coordinates NADP(+). Lys-221 is a binding site for phosphate. Residue Arg-243 participates in substrate binding. The Proton acceptor role is filled by His-250. Residue Gln-323 coordinates NADP(+).

It belongs to the aspartate-semialdehyde dehydrogenase family. In terms of assembly, homodimer.

The enzyme catalyses L-aspartate 4-semialdehyde + phosphate + NADP(+) = 4-phospho-L-aspartate + NADPH + H(+). Its pathway is amino-acid biosynthesis; L-lysine biosynthesis via DAP pathway; (S)-tetrahydrodipicolinate from L-aspartate: step 2/4. It participates in amino-acid biosynthesis; L-methionine biosynthesis via de novo pathway; L-homoserine from L-aspartate: step 2/3. The protein operates within amino-acid biosynthesis; L-threonine biosynthesis; L-threonine from L-aspartate: step 2/5. In terms of biological role, catalyzes the NADPH-dependent formation of L-aspartate-semialdehyde (L-ASA) by the reductive dephosphorylation of L-aspartyl-4-phosphate. The chain is Aspartate-semialdehyde dehydrogenase from Prochlorococcus marinus (strain SARG / CCMP1375 / SS120).